A 186-amino-acid chain; its full sequence is Nucleoside diphosphate kinase, mitochondrial (186 aa).

A mitochondrion-targeting transit peptide spans 1–32 (MGSLFGRVAALRALLCGPRFQCLLVRPSSGGP). ATP is bound by residues Lys-44, Phe-92, Arg-120, Thr-126, Arg-137, and Asn-147. Residue His-150 is the Pros-phosphohistidine intermediate of the active site.

Belongs to the NDK family. Homohexamer. Interacts with OPA1. Interacts with CAPN8. Requires Mg(2+) as cofactor. In terms of tissue distribution, expressed in the base region of the oxyntic and pyloric mucosae.

It localises to the mitochondrion intermembrane space. It is found in the mitochondrion matrix. The catalysed reaction is a 2'-deoxyribonucleoside 5'-diphosphate + ATP = a 2'-deoxyribonucleoside 5'-triphosphate + ADP. It catalyses the reaction a ribonucleoside 5'-diphosphate + ATP = a ribonucleoside 5'-triphosphate + ADP. In terms of biological role, major role in the synthesis of nucleoside triphosphates other than ATP. The ATP gamma phosphate is transferred to the NDP beta phosphate via a ping-pong mechanism, using a phosphorylated active-site intermediate. Through the catalyzed exchange of gamma-phosphate between di- and triphosphonucleosides participates in regulation of intracellular nucleotide homeostasis. Binds to anionic phospholipids, predominantly to cardiolipin; the binding inhibits its phosphotransfer activity. Acts as a mitochondria-specific NDK; its association with cardiolipin-containing mitochondrial inner membrane is coupled to respiration suggesting that ADP locally regenerated in the mitochondrion innermembrane space by its activity is directly taken up via ANT ADP/ATP translocase into the matrix space to stimulate respiratory ATP regeneration. Proposed to increase GTP-loading on dynamin-related GTPase OPA1 in mitochondria. In vitro can induce liposome cross-linking suggesting that it can cross-link inner and outer membranes to form contact sites, and promotes intermembrane migration of anionic phosphoplipids. Promotes the redistribution of cardiolipin between the mitochondrial inner membrane and outer membrane which is implicated in pro-apoptotic signaling. The sequence is that of Nucleoside diphosphate kinase, mitochondrial (Nme4) from Mus musculus (Mouse).